Here is a 373-residue protein sequence, read N- to C-terminus: tRNA-specific 2-thiouridylase MnmA (373 aa).

ATP contacts are provided by residues 18–25 (AMSGGVDS) and leucine 44. The Nucleophile role is filled by cysteine 117. A disulfide bridge links cysteine 117 with cysteine 214. Residue glycine 141 participates in ATP binding. Residues 163-165 (RDQ) form an interaction with tRNA region. The Cysteine persulfide intermediate role is filled by cysteine 214.

It belongs to the MnmA/TRMU family.

It is found in the cytoplasm. The enzyme catalyses S-sulfanyl-L-cysteinyl-[protein] + uridine(34) in tRNA + AH2 + ATP = 2-thiouridine(34) in tRNA + L-cysteinyl-[protein] + A + AMP + diphosphate + H(+). Its function is as follows. Catalyzes the 2-thiolation of uridine at the wobble position (U34) of tRNA, leading to the formation of s(2)U34. The polypeptide is tRNA-specific 2-thiouridylase MnmA (Paramagnetospirillum magneticum (strain ATCC 700264 / AMB-1) (Magnetospirillum magneticum)).